A 355-amino-acid chain; its full sequence is Phosphoserine aminotransferase (355 aa).

Arg-41 provides a ligand contact to L-glutamate. Residues 75–76 (AS), Trp-99, Thr-147, Asp-166, and Gln-189 contribute to the pyridoxal 5'-phosphate site. The residue at position 190 (Lys-190) is an N6-(pyridoxal phosphate)lysine. 231–232 (NT) contributes to the pyridoxal 5'-phosphate binding site.

Belongs to the class-V pyridoxal-phosphate-dependent aminotransferase family. SerC subfamily. As to quaternary structure, homodimer. Requires pyridoxal 5'-phosphate as cofactor.

It is found in the cytoplasm. It carries out the reaction O-phospho-L-serine + 2-oxoglutarate = 3-phosphooxypyruvate + L-glutamate. The enzyme catalyses 4-(phosphooxy)-L-threonine + 2-oxoglutarate = (R)-3-hydroxy-2-oxo-4-phosphooxybutanoate + L-glutamate. It functions in the pathway amino-acid biosynthesis; L-serine biosynthesis; L-serine from 3-phospho-D-glycerate: step 2/3. The protein operates within cofactor biosynthesis; pyridoxine 5'-phosphate biosynthesis; pyridoxine 5'-phosphate from D-erythrose 4-phosphate: step 3/5. Its function is as follows. Catalyzes the reversible conversion of 3-phosphohydroxypyruvate to phosphoserine and of 3-hydroxy-2-oxo-4-phosphonooxybutanoate to phosphohydroxythreonine. In Bacteroides fragilis (strain ATCC 25285 / DSM 2151 / CCUG 4856 / JCM 11019 / LMG 10263 / NCTC 9343 / Onslow / VPI 2553 / EN-2), this protein is Phosphoserine aminotransferase.